A 448-amino-acid polypeptide reads, in one-letter code: UPF0210 protein Pars_1033 (448 aa).

It belongs to the UPF0210 family.

This is UPF0210 protein Pars_1033 from Pyrobaculum arsenaticum (strain DSM 13514 / JCM 11321 / PZ6).